Reading from the N-terminus, the 221-residue chain is Adenylate kinase (221 aa).

ATP is bound at residue 10–15 (GAGKGT). The tract at residues 30–59 (STGDMLRAAVKAGTPLGIEAKKVMDAGGLV) is NMP. AMP-binding positions include threonine 31, arginine 36, 57–59 (GLV), 85–88 (GFPR), and glutamine 92. Residues 122–159 (GRRVHVASGRTYHVKFNPPKADMVDDETGEALIQRDDD) form an LID region. ATP-binding positions include arginine 123 and 132-133 (TY). 2 residues coordinate AMP: arginine 156 and arginine 167. Residue glycine 207 coordinates ATP.

The protein belongs to the adenylate kinase family. As to quaternary structure, monomer.

The protein resides in the cytoplasm. The enzyme catalyses AMP + ATP = 2 ADP. The protein operates within purine metabolism; AMP biosynthesis via salvage pathway; AMP from ADP: step 1/1. Catalyzes the reversible transfer of the terminal phosphate group between ATP and AMP. Plays an important role in cellular energy homeostasis and in adenine nucleotide metabolism. The sequence is that of Adenylate kinase from Cupriavidus metallidurans (strain ATCC 43123 / DSM 2839 / NBRC 102507 / CH34) (Ralstonia metallidurans).